Reading from the N-terminus, the 542-residue chain is Chaperonin GroEL 1 (542 aa).

ATP-binding positions include 29–32 (TLGP), 86–90 (DGTTT), Gly-413, 477–479 (NAA), and Asp-493.

Belongs to the chaperonin (HSP60) family. As to quaternary structure, forms a cylinder of 14 subunits composed of two heptameric rings stacked back-to-back. Interacts with the co-chaperonin GroES.

The protein resides in the cytoplasm. It carries out the reaction ATP + H2O + a folded polypeptide = ADP + phosphate + an unfolded polypeptide.. Its function is as follows. Together with its co-chaperonin GroES, plays an essential role in assisting protein folding. The GroEL-GroES system forms a nano-cage that allows encapsulation of the non-native substrate proteins and provides a physical environment optimized to promote and accelerate protein folding. This chain is Chaperonin GroEL 1, found in Kineococcus radiotolerans (strain ATCC BAA-149 / DSM 14245 / SRS30216).